The primary structure comprises 245 residues: 1-(5-phosphoribosyl)-5-[(5-phosphoribosylamino)methylideneamino] imidazole-4-carboxamide isomerase (245 aa).

Asp7 (proton acceptor) is an active-site residue. Asp129 acts as the Proton donor in catalysis.

The protein belongs to the HisA/HisF family.

The protein localises to the cytoplasm. The enzyme catalyses 1-(5-phospho-beta-D-ribosyl)-5-[(5-phospho-beta-D-ribosylamino)methylideneamino]imidazole-4-carboxamide = 5-[(5-phospho-1-deoxy-D-ribulos-1-ylimino)methylamino]-1-(5-phospho-beta-D-ribosyl)imidazole-4-carboxamide. It participates in amino-acid biosynthesis; L-histidine biosynthesis; L-histidine from 5-phospho-alpha-D-ribose 1-diphosphate: step 4/9. The protein is 1-(5-phosphoribosyl)-5-[(5-phosphoribosylamino)methylideneamino] imidazole-4-carboxamide isomerase of Escherichia coli (strain ATCC 8739 / DSM 1576 / NBRC 3972 / NCIMB 8545 / WDCM 00012 / Crooks).